Reading from the N-terminus, the 72-residue chain is Translation initiation factor IF-1 (72 aa).

Positions 1–72 constitute an S1-like domain; it reads MAKEEVLEFP…TKGRITYRLK (72 aa).

This sequence belongs to the IF-1 family. Component of the 30S ribosomal translation pre-initiation complex which assembles on the 30S ribosome in the order IF-2 and IF-3, IF-1 and N-formylmethionyl-tRNA(fMet); mRNA recruitment can occur at any time during PIC assembly.

The protein resides in the cytoplasm. Its function is as follows. One of the essential components for the initiation of protein synthesis. Stabilizes the binding of IF-2 and IF-3 on the 30S subunit to which N-formylmethionyl-tRNA(fMet) subsequently binds. Helps modulate mRNA selection, yielding the 30S pre-initiation complex (PIC). Upon addition of the 50S ribosomal subunit IF-1, IF-2 and IF-3 are released leaving the mature 70S translation initiation complex. The protein is Translation initiation factor IF-1 of Brucella suis biovar 1 (strain 1330).